Reading from the N-terminus, the 406-residue chain is 3-oxoacyl-[acyl-carrier-protein] synthase 1 (406 aa).

A Ketosynthase family 3 (KS3) domain is found at Met1–Lys405. Catalysis depends on for beta-ketoacyl synthase activity residues Cys164, His299, and His335.

This sequence belongs to the thiolase-like superfamily. Beta-ketoacyl-ACP synthases family. In terms of assembly, homodimer.

The protein resides in the cytoplasm. It carries out the reaction a fatty acyl-[ACP] + malonyl-[ACP] + H(+) = a 3-oxoacyl-[ACP] + holo-[ACP] + CO2. The catalysed reaction is (3Z)-decenoyl-[ACP] + malonyl-[ACP] + H(+) = 3-oxo-(5Z)-dodecenoyl-[ACP] + holo-[ACP] + CO2. It functions in the pathway lipid metabolism; fatty acid biosynthesis. In terms of biological role, involved in the type II fatty acid elongation cycle. Catalyzes the elongation of a wide range of acyl-ACP by the addition of two carbons from malonyl-ACP to an acyl acceptor. Can also use unsaturated fatty acids. Catalyzes a key reaction in unsaturated fatty acid (UFA) synthesis, the elongation of the cis-3-decenoyl-ACP produced by FabA. In Buchnera aphidicola subsp. Acyrthosiphon pisum (strain APS) (Acyrthosiphon pisum symbiotic bacterium), this protein is 3-oxoacyl-[acyl-carrier-protein] synthase 1 (fabB).